We begin with the raw amino-acid sequence, 306 residues long: GTP-binding protein RAD (306 aa).

Residues 1 to 13 are compositionally biased toward gly residues; sequence MTLNGGSGAGGSR. Residues 1 to 91 form a disordered region; that stretch reads MTLNGGSGAG…GDSGSEDGVY (91 aa). Position 23 is an omega-N-methylarginine (R23). S25 is modified (phosphoserine). A compositionally biased stretch (low complexity) spans 56–88; it reads AATAAGTRTQGQRLDWPEGSSDSLSSGDSGSED. GTP contacts are provided by residues 97–104 and 201–204; these read GAPGVGKS and NKSD. The segment at 276–295 is calmodulin-binding; it reads AKLFLGRIVARNSRKMAFLA.

This sequence belongs to the small GTPase superfamily. RGK family. In terms of assembly, interacts with Calmodulin preferentially in the inactive, GDP-bound form. Interacts with CAMK2D. Interacts with CACNB2; interaction may be involved in beta-adrenergic regulation of heart rate and contractile force. Interaction with CACNB2 regulates the trafficking of CACNA1C to the cell membrane.

The protein localises to the cell membrane. Functionally, may regulate basal voltage-dependent L-type Ca(2+) currents and be required for beta-adrenergic augmentation of Ca(2+) influx in cardiomyocytes, thereby regulating increases in heart rate and contractile force. May play an important role in cardiac antiarrhythmia via the strong suppression of voltage-dependent L-type Ca(2+) currents. Regulates voltage-gated L-type calcium channel subunit alpha-1C trafficking to the cell membrane. Inhibits cardiac hypertrophy through the calmodulin-dependent kinase II (CaMKII) pathway. Inhibits phosphorylation and activation of CAMK2D. The polypeptide is GTP-binding protein RAD (Rrad) (Rattus norvegicus (Rat)).